We begin with the raw amino-acid sequence, 210 residues long: 3-phospho-D-glycerate guanylyltransferase (210 aa).

Belongs to the CofC family.

The catalysed reaction is (2R)-3-phosphoglycerate + GTP + H(+) = 3-[(R)-glyceryl]-diphospho-5'-guanosine + diphosphate. It functions in the pathway cofactor biosynthesis; coenzyme F420 biosynthesis. In terms of biological role, guanylyltransferase that catalyzes the activation of (2R)-3-phosphoglycerate (3PG) as 3-[(R)-glyceryl]-diphospho-5'-guanosine, via the condensation of 3PG with GTP. It is involved in the biosynthesis of a derivative of the hydride carrier cofactor coenzyme F420, 3PG-F420. The chain is 3-phospho-D-glycerate guanylyltransferase from Colwellia psychrerythraea (strain 34H / ATCC BAA-681) (Vibrio psychroerythus).